The chain runs to 469 residues: ATP synthase subunit beta (469 aa).

Glycine 155–threonine 162 serves as a coordination point for ATP.

It belongs to the ATPase alpha/beta chains family. As to quaternary structure, F-type ATPases have 2 components, CF(1) - the catalytic core - and CF(0) - the membrane proton channel. CF(1) has five subunits: alpha(3), beta(3), gamma(1), delta(1), epsilon(1). CF(0) has three main subunits: a(1), b(2) and c(9-12). The alpha and beta chains form an alternating ring which encloses part of the gamma chain. CF(1) is attached to CF(0) by a central stalk formed by the gamma and epsilon chains, while a peripheral stalk is formed by the delta and b chains.

It localises to the cell inner membrane. It catalyses the reaction ATP + H2O + 4 H(+)(in) = ADP + phosphate + 5 H(+)(out). Functionally, produces ATP from ADP in the presence of a proton gradient across the membrane. The catalytic sites are hosted primarily by the beta subunits. This is ATP synthase subunit beta from Helicobacter pylori (strain P12).